The following is a 208-amino-acid chain: uncharacterized protein (208 aa).

Disordered regions lie at residues 91 to 115, 127 to 156, and 182 to 208; these read PGQAGSQEAADGKGRLPDITSPSQD, QSWSSGTSRPTCLAYRPRHLSPSSKPKRPG, and NKLGSSDDSDTDRFSSVTSGSSRRKFK. A compositionally biased stretch (polar residues) spans 127-136; that stretch reads QSWSSGTSRP.

This is an uncharacterized protein from Rattus norvegicus (Rat).